Here is a 199-residue protein sequence, read N- to C-terminus: Nucleoside triphosphate pyrophosphatase (199 aa).

The active-site Proton acceptor is the Asp-76.

It belongs to the Maf family. It depends on a divalent metal cation as a cofactor.

The protein resides in the cytoplasm. It catalyses the reaction a ribonucleoside 5'-triphosphate + H2O = a ribonucleoside 5'-phosphate + diphosphate + H(+). It carries out the reaction a 2'-deoxyribonucleoside 5'-triphosphate + H2O = a 2'-deoxyribonucleoside 5'-phosphate + diphosphate + H(+). Its function is as follows. Nucleoside triphosphate pyrophosphatase. May have a dual role in cell division arrest and in preventing the incorporation of modified nucleotides into cellular nucleic acids. This is Nucleoside triphosphate pyrophosphatase from Ruegeria pomeroyi (strain ATCC 700808 / DSM 15171 / DSS-3) (Silicibacter pomeroyi).